The chain runs to 23 residues: Cytochrome c3-1 (23 aa).

Residues 1 to 23 (AAPKAPADGLKMDKTKQXVVFNH) are disordered. His23 lines the heme pocket.

Binds 4 heme groups per subunit.

The protein resides in the periplasm. Functionally, participates in sulfate respiration coupled with phosphorylation by transferring electrons from the enzyme dehydrogenase to ferredoxin. This is Cytochrome c3-1 from Nitratidesulfovibrio vulgaris (Desulfovibrio vulgaris).